We begin with the raw amino-acid sequence, 571 residues long: Proline--tRNA ligase (571 aa).

The protein belongs to the class-II aminoacyl-tRNA synthetase family. ProS type 1 subfamily. As to quaternary structure, homodimer.

Its subcellular location is the cytoplasm. It carries out the reaction tRNA(Pro) + L-proline + ATP = L-prolyl-tRNA(Pro) + AMP + diphosphate. Its function is as follows. Catalyzes the attachment of proline to tRNA(Pro) in a two-step reaction: proline is first activated by ATP to form Pro-AMP and then transferred to the acceptor end of tRNA(Pro). As ProRS can inadvertently accommodate and process non-cognate amino acids such as alanine and cysteine, to avoid such errors it has two additional distinct editing activities against alanine. One activity is designated as 'pretransfer' editing and involves the tRNA(Pro)-independent hydrolysis of activated Ala-AMP. The other activity is designated 'posttransfer' editing and involves deacylation of mischarged Ala-tRNA(Pro). The misacylated Cys-tRNA(Pro) is not edited by ProRS. The sequence is that of Proline--tRNA ligase from Aliivibrio fischeri (strain MJ11) (Vibrio fischeri).